A 334-amino-acid chain; its full sequence is Non-functional pseudokinase ZED1 (334 aa).

Positions 49–334 constitute a Protein kinase domain; that stretch reads FSESRIISSW…KELKLIEKLS (286 aa). ATP is bound by residues 55–63 and K76; that span reads ISSWGYFIW. Residues T125 and T177 each carry the O-acetylthreonine modification.

This sequence belongs to the protein kinase superfamily. Ser/Thr protein kinase family. ZRK subfamily. As to quaternary structure, interacts with RPP13L4/ZAR1. Component of an immune signaling complex made of, at least, SZE1, BKN2/SZE2, ZAR1 and ZED1. Binds directly to SZE1 at the plasma membrane. As to expression, expressed in seedlings, young leaves, floral organs, shoot apical meristems (SAM) and inflorescence stems.

It localises to the cytoplasm. Its subcellular location is the cytosol. It is found in the nucleus. The protein localises to the cell membrane. Together with RPP13L4/ZAR1, involved in the ambient temperature (above 22 degrees Celsius)-sensitive aerial organ development. Together with RPP13L4/ZAR1, involved in the regulation of the ambient temperature-sensitive intersection of growth and immune response in the absence of pathogens, by repressing the transcription of SNC1. Probable non-functional kinase required for recognition of the Pseudomonas syringae type III effector HopZ1a by RPP13L4/ZAR1 and, together with SZE1 and SZE2, to trigger subsequent defense responses. May function as a decoy to trap HopZ1a in the ZAR1 complex for recognition by the plant immune system. The chain is Non-functional pseudokinase ZED1 from Arabidopsis thaliana (Mouse-ear cress).